A 492-amino-acid chain; its full sequence is N-succinylglutamate 5-semialdehyde dehydrogenase (492 aa).

An NAD(+)-binding site is contributed by Gly-220–Gly-225. Residues Glu-243 and Cys-277 contribute to the active site.

The protein belongs to the aldehyde dehydrogenase family. AstD subfamily.

The enzyme catalyses N-succinyl-L-glutamate 5-semialdehyde + NAD(+) + H2O = N-succinyl-L-glutamate + NADH + 2 H(+). The protein operates within amino-acid degradation; L-arginine degradation via AST pathway; L-glutamate and succinate from L-arginine: step 4/5. Its function is as follows. Catalyzes the NAD-dependent reduction of succinylglutamate semialdehyde into succinylglutamate. This Escherichia coli O157:H7 protein is N-succinylglutamate 5-semialdehyde dehydrogenase.